A 322-amino-acid chain; its full sequence is MQNLQGMLRDQRVAQDLQEVIFSIELACKDIAKKVQLGALAGVLGATESENVQGETQKKLDVISNDILKASLAANSNVLALASEEEDNVVAANAGGRYVVAFDPLDGSSNIDINGQIGTIFTIFEALDGVAANSGKHFLQQGNKQVCAGYVLYGASTLMVITVDGPTSCLTLDPATQTFSLTNTALQVPDQTQEFAVNLANERFWLPKFKSYVADLKLGEEGVRGKRFNMRWNASMVGDVHRVLMRGGIFMYPSDTRNPKQPAKLRLLYEANPMALLIERAGGKAFNETQRILDVTPCALHERIAVILGSEQEVATCLEYLN.

E84, D103, L105, and D106 together coordinate Mg(2+). Substrate-binding positions include 106-109 (DGSS), N198, and K264. Residue E270 coordinates Mg(2+).

Belongs to the FBPase class 1 family. As to quaternary structure, homotetramer. Mg(2+) serves as cofactor.

The protein localises to the cytoplasm. The catalysed reaction is beta-D-fructose 1,6-bisphosphate + H2O = beta-D-fructose 6-phosphate + phosphate. Its pathway is carbohydrate biosynthesis; gluconeogenesis. The polypeptide is Fructose-1,6-bisphosphatase class 1 (Saccharophagus degradans (strain 2-40 / ATCC 43961 / DSM 17024)).